The sequence spans 357 residues: Chaperone protein DnaJ (357 aa).

Positions 4 to 69 constitute a J domain; it reads DYYAILGVDR…QKRKQYDETG (66 aa). The CR-type zinc finger occupies 132 to 213; the sequence is GASKNVKYRR…CHGTGTVSKN (82 aa). Zn(2+) is bound by residues cysteine 145, cysteine 148, cysteine 161, cysteine 164, cysteine 187, cysteine 190, cysteine 201, and cysteine 204. CXXCXGXG motif repeat units follow at residues 145–152, 161–168, 187–194, and 201–208; these read CEHCSGTG, CPTCHGSG, CRTCHGRG, and CTVCHGTG.

This sequence belongs to the DnaJ family. As to quaternary structure, homodimer. Zn(2+) is required as a cofactor.

The protein resides in the cytoplasm. Participates actively in the response to hyperosmotic and heat shock by preventing the aggregation of stress-denatured proteins and by disaggregating proteins, also in an autonomous, DnaK-independent fashion. Unfolded proteins bind initially to DnaJ; upon interaction with the DnaJ-bound protein, DnaK hydrolyzes its bound ATP, resulting in the formation of a stable complex. GrpE releases ADP from DnaK; ATP binding to DnaK triggers the release of the substrate protein, thus completing the reaction cycle. Several rounds of ATP-dependent interactions between DnaJ, DnaK and GrpE are required for fully efficient folding. Also involved, together with DnaK and GrpE, in the DNA replication of plasmids through activation of initiation proteins. The polypeptide is Chaperone protein DnaJ (Picrophilus torridus (strain ATCC 700027 / DSM 9790 / JCM 10055 / NBRC 100828 / KAW 2/3)).